The sequence spans 332 residues: Glucokinase (332 aa).

15-20 (ADIGGT) is a binding site for ATP.

It belongs to the bacterial glucokinase family.

Its subcellular location is the cytoplasm. The catalysed reaction is D-glucose + ATP = D-glucose 6-phosphate + ADP + H(+). The sequence is that of Glucokinase from Campylobacter jejuni subsp. doylei (strain ATCC BAA-1458 / RM4099 / 269.97).